The sequence spans 124 residues: Small ribosomal subunit protein uS12c (124 aa).

Disordered regions lie at residues 1–28 and 104–124; these read MPTIQQLVRSERHKSSKKTKSPALKGCP and ASGVKDRKKSRSKYGAKQPKT. Basic residues-rich tracts occupy residues 11-20 and 109-124; these read ERHKSSKKTK and DRKKSRSKYGAKQPKT.

This sequence belongs to the universal ribosomal protein uS12 family. Part of the 30S ribosomal subunit.

It localises to the plastid. The protein resides in the chloroplast. Its function is as follows. With S4 and S5 plays an important role in translational accuracy. Located at the interface of the 30S and 50S subunits. The protein is Small ribosomal subunit protein uS12c (rps12) of Gracilaria tenuistipitata var. liui (Red alga).